The primary structure comprises 602 residues: Elongation factor 4 (602 aa).

A tr-type G domain is found at 2–184 (KKIRNFAIIA…RIVRDIPPPK (183 aa)). Residues 14–19 (DHGKST) and 131–134 (NKID) each bind GTP.

It belongs to the TRAFAC class translation factor GTPase superfamily. Classic translation factor GTPase family. LepA subfamily.

The protein resides in the cell membrane. The enzyme catalyses GTP + H2O = GDP + phosphate + H(+). In terms of biological role, required for accurate and efficient protein synthesis under certain stress conditions. May act as a fidelity factor of the translation reaction, by catalyzing a one-codon backward translocation of tRNAs on improperly translocated ribosomes. Back-translocation proceeds from a post-translocation (POST) complex to a pre-translocation (PRE) complex, thus giving elongation factor G a second chance to translocate the tRNAs correctly. Binds to ribosomes in a GTP-dependent manner. This chain is Elongation factor 4, found in Baumannia cicadellinicola subsp. Homalodisca coagulata.